We begin with the raw amino-acid sequence, 343 residues long: Mesaconyl-CoA hydratase (343 aa).

The MaoC-like domain occupies 47 to 116 (SDEFARACGL…STVIGLKENS (70 aa)). Substrate-binding positions include 60 to 63 (PVDE), 83 to 86 (VANL), and 94 to 96 (LKP).

The enzyme catalyses (2R,3S)-beta-methylmalyl-CoA = 2-methylfumaryl-CoA + H2O. Involved in the ethylmalonyl-CoA pathway for acetate assimilation. Catalyzes the reversible hydration of mesaconyl-CoA (2-methylfumaryl-CoA) to yield beta-methylmalyl-CoA ((2R,3S)-beta-methylmalyl-CoA). The polypeptide is Mesaconyl-CoA hydratase (mch) (Cereibacter sphaeroides (strain ATCC 17023 / DSM 158 / JCM 6121 / CCUG 31486 / LMG 2827 / NBRC 12203 / NCIMB 8253 / ATH 2.4.1.) (Rhodobacter sphaeroides)).